We begin with the raw amino-acid sequence, 359 residues long: Small ribosomal subunit protein mS22 (359 aa).

Belongs to the mitochondrion-specific ribosomal protein mS22 family. As to quaternary structure, component of the mitochondrial ribosome small subunit (28S) which comprises a 12S rRNA and about 30 distinct proteins.

It localises to the mitochondrion. In Bos taurus (Bovine), this protein is Small ribosomal subunit protein mS22 (MRPS22).